The following is a 305-amino-acid chain: Aspartate carbamoyltransferase catalytic subunit (305 aa).

R56 and T57 together coordinate carbamoyl phosphate. K84 contributes to the L-aspartate binding site. Residues R106, H136, and Q139 each coordinate carbamoyl phosphate. The L-aspartate site is built by R169 and R221. Residues A262 and P263 each coordinate carbamoyl phosphate.

This sequence belongs to the aspartate/ornithine carbamoyltransferase superfamily. ATCase family. As to quaternary structure, heterododecamer (2C3:3R2) of six catalytic PyrB chains organized as two trimers (C3), and six regulatory PyrI chains organized as three dimers (R2).

The enzyme catalyses carbamoyl phosphate + L-aspartate = N-carbamoyl-L-aspartate + phosphate + H(+). The protein operates within pyrimidine metabolism; UMP biosynthesis via de novo pathway; (S)-dihydroorotate from bicarbonate: step 2/3. In terms of biological role, catalyzes the condensation of carbamoyl phosphate and aspartate to form carbamoyl aspartate and inorganic phosphate, the committed step in the de novo pyrimidine nucleotide biosynthesis pathway. This Streptococcus sanguinis (strain SK36) protein is Aspartate carbamoyltransferase catalytic subunit.